The primary structure comprises 98 residues: NADH-ubiquinone oxidoreductase chain 4L (98 aa).

Transmembrane regions (helical) follow at residues 1 to 21 (MNLIDLILIAIYVIGISGLIF), 26 to 46 (IINILIISELNLGTLGMLFVL), and 61 to 81 (LYILTFTAAESAIGLAIVVIL).

This sequence belongs to the complex I subunit 4L family.

It localises to the mitochondrion membrane. It carries out the reaction a ubiquinone + NADH + 5 H(+)(in) = a ubiquinol + NAD(+) + 4 H(+)(out). Core subunit of the mitochondrial membrane respiratory chain NADH dehydrogenase (Complex I) that is believed to belong to the minimal assembly required for catalysis. Complex I functions in the transfer of electrons from NADH to the respiratory chain. The immediate electron acceptor for the enzyme is believed to be ubiquinone. This is NADH-ubiquinone oxidoreductase chain 4L (nad4L) from Dictyostelium citrinum (Slime mold).